The following is a 336-amino-acid chain: Fructose-1,6-bisphosphatase class 1 (336 aa).

The Mg(2+) site is built by Glu-92, Asp-115, Leu-117, and Asp-118. Residues 118–121 (DGSS), Asn-211, Tyr-244, 262–264 (YLY), and Lys-274 contribute to the substrate site. Mg(2+) is bound at residue Glu-280.

Belongs to the FBPase class 1 family. Homotetramer. Mg(2+) is required as a cofactor.

The protein localises to the cytoplasm. It catalyses the reaction beta-D-fructose 1,6-bisphosphate + H2O = beta-D-fructose 6-phosphate + phosphate. Its pathway is carbohydrate biosynthesis; gluconeogenesis. This Aliivibrio salmonicida (strain LFI1238) (Vibrio salmonicida (strain LFI1238)) protein is Fructose-1,6-bisphosphatase class 1.